We begin with the raw amino-acid sequence, 513 residues long: cAMP-regulated M3R protein (513 aa).

It to D.discoideum protein M3L.

This is cAMP-regulated M3R protein (prtB) from Dictyostelium discoideum (Social amoeba).